The following is a 113-amino-acid chain: uncharacterized protein (113 aa).

The first 19 residues, 1–19 (MLSPLSPRIIAAFTTAVGA), serve as a signal peptide directing secretion.

This sequence to M.tuberculosis Rv1291c.

This is an uncharacterized protein from Mycobacterium tuberculosis (strain CDC 1551 / Oshkosh).